Here is a 310-residue protein sequence, read N- to C-terminus: Porphobilinogen deaminase (310 aa).

C236 carries the S-(dipyrrolylmethanemethyl)cysteine modification.

This sequence belongs to the HMBS family. In terms of assembly, monomer. Dipyrromethane serves as cofactor.

It carries out the reaction 4 porphobilinogen + H2O = hydroxymethylbilane + 4 NH4(+). The protein operates within porphyrin-containing compound metabolism; protoporphyrin-IX biosynthesis; coproporphyrinogen-III from 5-aminolevulinate: step 2/4. Tetrapolymerization of the monopyrrole PBG into the hydroxymethylbilane pre-uroporphyrinogen in several discrete steps. This chain is Porphobilinogen deaminase, found in Nitratiruptor sp. (strain SB155-2).